The chain runs to 203 residues: Alpha-amylase/subtilisin inhibitor (203 aa).

The segment covering 1–12 (MGSRRAGSSSSP) has biased composition (polar residues). An N-terminal signal peptide occupies residues 1 to 22 (MGSRRAGSSSSPLFWPAPPSRA). The segment at 1 to 34 (MGSRRAGSSSSPLFWPAPPSRAADPPPVHDTDGH) is disordered. Over residues 15 to 26 (WPAPPSRAADPP) the composition is skewed to pro residues. 2 disulfides stabilise this stretch: cysteine 65/cysteine 112 and cysteine 166/cysteine 170.

The protein belongs to the protease inhibitor I3 (leguminous Kunitz-type inhibitor) family.

This protein inhibits independently subtilisin and alpha-amylase. In Hordeum vulgare (Barley), this protein is Alpha-amylase/subtilisin inhibitor.